The primary structure comprises 381 residues: Peptidoglycan glycosyltransferase MrdB (381 aa).

10 helical membrane passes run 11–31, 40–60, 66–86, 102–122, 132–152, 156–176, 180–200, 263–283, 297–317, and 328–348; these read FDLL…LLIF, KQGV…FIPF, WLFA…FMGS, ITLQ…AHLI, YDWG…ALIL, DLGT…IVGL, VWLP…HFLH, FGFL…LHLF, IVAL…IAMT, and LPLF…FAIL.

This sequence belongs to the SEDS family. MrdB/RodA subfamily.

Its subcellular location is the cell inner membrane. The enzyme catalyses [GlcNAc-(1-&gt;4)-Mur2Ac(oyl-L-Ala-gamma-D-Glu-L-Lys-D-Ala-D-Ala)](n)-di-trans,octa-cis-undecaprenyl diphosphate + beta-D-GlcNAc-(1-&gt;4)-Mur2Ac(oyl-L-Ala-gamma-D-Glu-L-Lys-D-Ala-D-Ala)-di-trans,octa-cis-undecaprenyl diphosphate = [GlcNAc-(1-&gt;4)-Mur2Ac(oyl-L-Ala-gamma-D-Glu-L-Lys-D-Ala-D-Ala)](n+1)-di-trans,octa-cis-undecaprenyl diphosphate + di-trans,octa-cis-undecaprenyl diphosphate + H(+). Its pathway is cell wall biogenesis; peptidoglycan biosynthesis. Functionally, peptidoglycan polymerase that is essential for cell wall elongation. In Helicobacter pylori (strain J99 / ATCC 700824) (Campylobacter pylori J99), this protein is Peptidoglycan glycosyltransferase MrdB.